The following is a 144-amino-acid chain: Protein MIX23 (144 aa).

The residue at position 2 (Ala-2) is an N-acetylalanine. The stretch at 82–120 (VKSLREEREKNLDDLTLLKRLRKEQTKLKWMQSELNVEE) forms a coiled coil. N6-acetyllysine is present on Lys-100.

It belongs to the MIX23 family.

The sequence is that of Protein MIX23 from Mus musculus (Mouse).